Here is a 136-residue protein sequence, read N- to C-terminus: Gonadotropin subunit beta-2 (136 aa).

An N-terminal signal peptide occupies residues Met1 to Ala21. Intrachain disulfides connect Cys27/Cys75, Cys41/Cys90, Cys44/Cys128, Cys52/Cys106, Cys56/Cys108, and Cys111/Cys118. N-linked (GlcNAc...) asparagine glycosylation is present at Asn31.

It belongs to the glycoprotein hormones subunit beta family. As to quaternary structure, heterodimer of an alpha and a beta chain.

Its subcellular location is the secreted. Involved in gametogenesis and steroidogenesis. The polypeptide is Gonadotropin subunit beta-2 (cgbb) (Fundulus heteroclitus (Killifish)).